The chain runs to 320 residues: Malate dehydrogenase (320 aa).

NAD(+) contacts are provided by residues 10 to 15 (GSGMIG) and Asp34. Positions 83 and 89 each coordinate substrate. Residues Asn96 and 119-121 (ITN) each bind NAD(+). Residues Asn121 and Arg152 each contribute to the substrate site. His176 serves as the catalytic Proton acceptor.

This sequence belongs to the LDH/MDH superfamily. MDH type 3 family.

It carries out the reaction (S)-malate + NAD(+) = oxaloacetate + NADH + H(+). Its function is as follows. Catalyzes the reversible oxidation of malate to oxaloacetate. The protein is Malate dehydrogenase of Brucella melitensis biotype 2 (strain ATCC 23457).